We begin with the raw amino-acid sequence, 143 residues long: Large ribosomal subunit protein uL13 (143 aa).

This sequence belongs to the universal ribosomal protein uL13 family. In terms of assembly, part of the 50S ribosomal subunit.

In terms of biological role, this protein is one of the early assembly proteins of the 50S ribosomal subunit, although it is not seen to bind rRNA by itself. It is important during the early stages of 50S assembly. The sequence is that of Large ribosomal subunit protein uL13 from Methanosarcina acetivorans (strain ATCC 35395 / DSM 2834 / JCM 12185 / C2A).